A 412-amino-acid polypeptide reads, in one-letter code: Double C2-like domain-containing protein beta (412 aa).

The interval 1–36 (MTLRRRGEKATISIQEHMAIDVCPGPIRPIKQISDY) is negatively regulates targeting to plasma membrane. The mediates interaction with DYNLT1 stretch occupies residues 1 to 90 (MTLRRRGEKA…EDVDQLFGAY (90 aa)). The interval 38–123 (PRFPRGLPPT…PDVDGYESDD (86 aa)) is disordered. Residues 43–58 (GLPPTAAPRAPAPPDA) show a composition bias toward pro residues. Low complexity predominate over residues 59 to 74 (PARSPAASASPRSPSD). Residues 95–108 (GPSPGPSPARPPAK) are compositionally biased toward pro residues. A compositionally biased stretch (acidic residues) spans 112–123 (DEPDVDGYESDD). 2 C2 domains span residues 126 to 250 (ALGT…SICL) and 266 to 399 (ERGR…ERWH). Ca(2+)-binding residues include aspartate 157, aspartate 163, aspartate 218, aspartate 220, aspartate 297, aspartate 303, aspartate 357, aspartate 359, and aspartate 365. The tract at residues 257–375 (DKAEDKSLEE…FIGGVVLGIN (119 aa)) is mediates interaction with STXBP3. Serine 411 is subject to Phosphoserine.

In terms of assembly, interacts with cytoplasmic dynein light chain DYNLT1. May interact with UNC13A; the interaction mediates targeting to the plasma membrane. Probably interacts with the SNARE (soluble N-ethylmaleimide-sensitive factor attached protein receptor) complex composed of SNAP25, STX1A and VAMP2; the interaction is calcium-dependent and competitive with SYT1. Interacts with STX4; the interaction is calcium-dependent, increased by insulin and glucose, and mediates vesicle fusion with plasma membrane in pancreatic cells and adipocytes. Interacts with STXBP3; the interaction is direct, occurs at the cell membrane and regulates glucose-stimulated insulin secretion. Ca(2+) serves as cofactor. In terms of tissue distribution, widely expressed. Expressed in pancreatic islet cells (at protein level).

It localises to the cytoplasm. The protein localises to the cytoplasmic granule. The protein resides in the cell membrane. In terms of biological role, calcium sensor which positively regulates SNARE-dependent fusion of vesicles with membranes. Binds phospholipids in a calcium-dependent manner and may act at the priming stage of fusion by modifying membrane curvature to stimulate fusion. Involved in calcium-triggered exocytosis in chromaffin cells and calcium-dependent spontaneous release of neurotransmitter in absence of action potentials in neuronal cells. Involved both in glucose-stimulated insulin secretion in pancreatic cells and insulin-dependent GLUT4 transport to the plasma membrane in adipocytes. The chain is Double C2-like domain-containing protein beta (Doc2b) from Mus musculus (Mouse).